The primary structure comprises 318 residues: Homoserine kinase (318 aa).

97-107 (PIGSGLGSSAC) contributes to the ATP binding site.

Belongs to the GHMP kinase family. Homoserine kinase subfamily.

The protein localises to the cytoplasm. It carries out the reaction L-homoserine + ATP = O-phospho-L-homoserine + ADP + H(+). Its pathway is amino-acid biosynthesis; L-threonine biosynthesis; L-threonine from L-aspartate: step 4/5. In terms of biological role, catalyzes the ATP-dependent phosphorylation of L-homoserine to L-homoserine phosphate. This chain is Homoserine kinase, found in Aliivibrio fischeri (strain ATCC 700601 / ES114) (Vibrio fischeri).